The primary structure comprises 181 residues: Alkyl hydroperoxide reductase AhpD (181 aa).

Catalysis depends on C131, which acts as the Proton donor. A disulfide bond links C131 and C134. C134 serves as the catalytic Cysteine sulfenic acid (-SOH) intermediate.

It belongs to the AhpD family.

The enzyme catalyses N(6)-[(R)-dihydrolipoyl]-L-lysyl-[lipoyl-carrier protein] + a hydroperoxide = N(6)-[(R)-lipoyl]-L-lysyl-[lipoyl-carrier protein] + an alcohol + H2O. Its function is as follows. Antioxidant protein with alkyl hydroperoxidase activity. Required for the reduction of the AhpC active site cysteine residues and for the regeneration of the AhpC enzyme activity. The polypeptide is Alkyl hydroperoxide reductase AhpD (Rhodopseudomonas palustris (strain BisB18)).